A 354-amino-acid chain; its full sequence is Protein FAM181A (354 aa).

Basic and acidic residues-rich tracts occupy residues 1–14 and 129–142; these read MPLEERRSSGERND and YLKRGSEDRPRRLL. Disordered regions lie at residues 1-35, 117-160, and 172-193; these read MPLEERRSSGERNDAAPTNHRRPGEKRASTAKQVS, LPRG…CKEK, and AKEQLPQRQHPEAAQPGQVPMR.

It belongs to the FAM181 family.

This Homo sapiens (Human) protein is Protein FAM181A (FAM181A).